A 193-amino-acid polypeptide reads, in one-letter code: Ion-translocating oxidoreductase complex subunit A (193 aa).

6 consecutive transmembrane segments (helical) span residues leucine 5–leucine 25, isoleucine 39–valine 59, phenylalanine 62–alanine 82, leucine 102–leucine 122, alanine 134–isoleucine 154, and serine 171–valine 191.

The protein belongs to the NqrDE/RnfAE family. The complex is composed of six subunits: RnfA, RnfB, RnfC, RnfD, RnfE and RnfG.

It is found in the cell inner membrane. Its function is as follows. Part of a membrane-bound complex that couples electron transfer with translocation of ions across the membrane. This chain is Ion-translocating oxidoreductase complex subunit A, found in Yersinia pestis (strain Pestoides F).